We begin with the raw amino-acid sequence, 283 residues long: Elongation factor Ts (283 aa).

Residues 80–83 (TDFV) are involved in Mg(2+) ion dislocation from EF-Tu.

It belongs to the EF-Ts family.

It localises to the cytoplasm. In terms of biological role, associates with the EF-Tu.GDP complex and induces the exchange of GDP to GTP. It remains bound to the aminoacyl-tRNA.EF-Tu.GTP complex up to the GTP hydrolysis stage on the ribosome. In Actinobacillus pleuropneumoniae serotype 3 (strain JL03), this protein is Elongation factor Ts.